The chain runs to 51 residues: Large ribosomal subunit protein eL39 (51 aa).

This sequence belongs to the eukaryotic ribosomal protein eL39 family. Interacts with YIH1.

This is Large ribosomal subunit protein eL39 (RPL39) from Kluyveromyces marxianus (Yeast).